We begin with the raw amino-acid sequence, 691 residues long: Heat shock factor protein (691 aa).

A disordered region spans residues 1 to 31 (MSRSRSSAKAVQFKHESEEEEEDEEEQLPSR). Residues 18–27 (EEEEEDEEEQ) show a composition bias toward acidic residues. Residues 46-150 (VPAFLAKLWR…LLDQIKRKIS (105 aa)) mediate DNA binding. S256 is subject to Phosphoserine. Residue T258 is modified to Phosphothreonine. Phosphoserine is present on residues S260, S283, S299, and S580. Residues 288 to 307 (TAASHYDQESVSPPAVERPR) are disordered. The tract at residues 658–691 (SDILDTDDGNNDQEASRRQMQTQSSVLNTPRHEL) is disordered. Positions 659 to 668 (DILDTDDGNN) are enriched in acidic residues. Over residues 675–685 (RQMQTQSSVLN) the composition is skewed to polar residues.

The protein belongs to the HSF family. In terms of assembly, homotrimer. Post-translationally, exhibits temperature-dependent phosphorylation.

The protein localises to the nucleus. In terms of biological role, DNA-binding protein that specifically binds heat shock promoter elements (HSE) and activates transcription. In higher eukaryotes, HSF is unable to bind to the HSE unless the cells are heat shocked. The sequence is that of Heat shock factor protein (Hsf) from Drosophila melanogaster (Fruit fly).